We begin with the raw amino-acid sequence, 1762 residues long: Kinase D-interacting substrate of 220 kDa (1762 aa).

The Cytoplasmic portion of the chain corresponds to 1–508 (MSVLISQSVI…WLIVFLTLLL (508 aa)). ANK repeat units follow at residues 45–74 (AAEQ…NWTA), 78–107 (ASKE…GWTA), 111–140 (ACYK…SVYP), 145–174 (AGRG…TTPL), 178–207 (ARKG…MTAL), 211–240 (VKGG…NTAL), 244–273 (SKEG…DTVL), 277–306 (VRGG…KTAL), 310–339 (VEKG…ETPL), 343–372 (TKMR…DTPL), and 376–405 (IRGR…KAGE). The KAP NTPase domain maps to 440-953 (YDLYSSALAD…NIVSVTGRLL (514 aa)). Residues 509-529 (CGGLGLVFAFTVDTNLAIAIS) traverse the membrane as a helical segment. At 530–533 (LSFL) the chain is on the extracellular side. The chain crosses the membrane as a helical span at residues 534 to 554 (ALIYIFFIVIYFGGRREGESW). Topologically, residues 555 to 668 (NWAWALSTRL…SFVIFLFIVG (114 aa)) are cytoplasmic. Residues 669 to 689 (CIIAGITLLAIFRVDPKHLTV) traverse the membrane as a helical segment. Over 690 to 696 (NAILISI) the chain is Extracellular. Residues 697–717 (ASVVGLAFVLNCRTWWQVLDS) form a helical membrane-spanning segment. The Cytoplasmic segment spans residues 718–1680 (LLNSQRKRLH…TPSTVTLNNN (963 aa)). Phosphoserine occurs at positions 882 and 885. The residue at position 914 (T914) is a Phosphothreonine. The residue at position 918 (S918) is a Phosphoserine; by PKD. Residues 1089-1092 (PRPP) are mediates interaction with CRKL. A phosphoserine mark is found at S1163, S1288, S1344, S1351, S1353, S1354, and S1357. Disordered stretches follow at residues 1279–1305 (DPRF…HTEL), 1336–1358 (RHSN…LNSQ), 1390–1440 (EGGT…DGRK), and 1452–1556 (YSSS…EPIR). Polar residues predominate over residues 1338 to 1350 (SNLSWQSQTRRTP). The segment covering 1395-1422 (SSTISGRSSPHSTYYIGQSSSGGSIHST) has biased composition (low complexity). Over residues 1423-1440 (LEQERGKEGELKQEDGRK) the composition is skewed to basic and acidic residues. The span at 1452 to 1462 (YSSSGVSTNEA) shows a compositional bias: polar residues. Phosphoserine occurs at positions 1513, 1518, 1547, and 1566. A compositionally biased stretch (acidic residues) spans 1514–1524 (DEDESGTEESD). Residues 1529–1553 (LKDDKDKKAEGKAERVCKSPEHSAE) are compositionally biased toward basic and acidic residues. A disordered region spans residues 1571–1628 (DKKDSSDSGVRSNESSPNHSLHNEAADDSQLEKANLIELEDEGHSGKRGMPHSLSGLQ). The span at 1579-1590 (GVRSNESSPNHS) shows a compositional bias: polar residues. Residues S1615 and S1625 each carry the phosphoserine modification. Phosphothreonine is present on T1671. Residue S1673 is modified to Phosphoserine. A Phosphothreonine modification is found at T1676. The interval 1704–1762 (ILRPGPSPNPTAVQNENLKSMAHKRSQRSSYTRLSKDASELHAASSESTGFGEERESIL) is disordered. The PDZ-binding motif lies at 1757–1762 (ERESIL).

As to quaternary structure, found in a complex, at least composed of KIDINS220, MAGI2, NTRK1 and RAPGEF2; the complex is mainly formed at late endosomes in a nerve growth factor (NGF)-dependent manner. Interacts with RAPGEF2; the interaction is strengthened after NGF stimulation. Isoform 2 interacts (via C-terminal domain) with MAGI2 isoform 1 (via PDZ domain). Interacts with NTRK1, NTRK2, NTRK3, ERKL and NGFR. Can form a ternary complex with NGFR and NTRK1 and this complex is affected by the expression levels of KIDINS220/ARMS. An increase in KIDINS220/ARMS expression leads to a decreased association of NGFR and NTRK1. Interacts (via PDZ-binding motif) with SNTA1 and SNTB2 (via PDZ domains). Interacts with EPHA4 and PRKD1. Tyrosine phosphorylated by NTRK1, NTRK2, EPHB2 and EPHA4. Phosphorylation at Ser-918 is induced by phorbol ester treatment. Phosphorylation by NTRK2 is induced by brain-derived neurotrophic factor (BDNF) and neurotrophin-4/5. Phosphorylation by NTRK1 is induced by nerve growth factor (NGF). As to expression, expressed in developing nervous system and in highly plastic areas of the adult brain. Also expressed in neuroendocrine cells, where it concentrates at the tip of neurites. Expressed in developing muscle and is concentrated at the neuromuscular junction (NMS). SNTA1 can regulate its localization in the NMS.

It localises to the membrane. Its subcellular location is the late endosome. Promotes a prolonged MAP-kinase signaling by neurotrophins through activation of a Rap1-dependent mechanism. Provides a docking site for the CRKL-C3G complex, resulting in Rap1-dependent sustained ERK activation. May play an important role in regulating postsynaptic signal transduction through the syntrophin-mediated localization of receptor tyrosine kinases such as EPHA4. In cooperation with SNTA1 can enhance EPHA4-induced JAK/STAT activation. Plays a role in nerve growth factor (NGF)-induced recruitment of RAPGEF2 to late endosomes and neurite outgrowth. May play a role in neurotrophin- and ephrin-mediated neuronal outgrowth and in axon guidance during neural development and in neuronal regeneration. This Rattus norvegicus (Rat) protein is Kinase D-interacting substrate of 220 kDa (Kidins220).